A 627-amino-acid chain; its full sequence is 1-deoxy-D-xylulose-5-phosphate synthase (627 aa).

Residues His-87 and 128-130 contribute to the thiamine diphosphate site; that span reads GHS. Asp-159 is a Mg(2+) binding site. Thiamine diphosphate contacts are provided by residues 160–161, Asn-188, Phe-295, and Glu-375; that span reads GA. Position 188 (Asn-188) interacts with Mg(2+).

It belongs to the transketolase family. DXPS subfamily. In terms of assembly, homodimer. Mg(2+) is required as a cofactor. The cofactor is thiamine diphosphate.

It carries out the reaction D-glyceraldehyde 3-phosphate + pyruvate + H(+) = 1-deoxy-D-xylulose 5-phosphate + CO2. The protein operates within metabolic intermediate biosynthesis; 1-deoxy-D-xylulose 5-phosphate biosynthesis; 1-deoxy-D-xylulose 5-phosphate from D-glyceraldehyde 3-phosphate and pyruvate: step 1/1. In terms of biological role, catalyzes the acyloin condensation reaction between C atoms 2 and 3 of pyruvate and glyceraldehyde 3-phosphate to yield 1-deoxy-D-xylulose-5-phosphate (DXP). The polypeptide is 1-deoxy-D-xylulose-5-phosphate synthase (Pseudomonas paraeruginosa (strain DSM 24068 / PA7) (Pseudomonas aeruginosa (strain PA7))).